The chain runs to 93 residues: Large ribosomal subunit protein uL23 (93 aa).

This sequence belongs to the universal ribosomal protein uL23 family. As to quaternary structure, part of the 50S ribosomal subunit. Contacts protein L29, and trigger factor when it is bound to the ribosome.

Functionally, one of the early assembly proteins it binds 23S rRNA. One of the proteins that surrounds the polypeptide exit tunnel on the outside of the ribosome. Forms the main docking site for trigger factor binding to the ribosome. This chain is Large ribosomal subunit protein uL23, found in Campylobacter curvus (strain 525.92).